A 37-amino-acid chain; its full sequence is uncharacterized protein (37 aa).

This is an uncharacterized protein from Saccharomyces cerevisiae (strain ATCC 204508 / S288c) (Baker's yeast).